Here is a 264-residue protein sequence, read N- to C-terminus: Small ribosomal subunit protein eS1 (264 aa).

N6-acetyllysine; alternate is present on Lys34. Lys34 is covalently cross-linked (Glycyl lysine isopeptide (Lys-Gly) (interchain with G-Cter in SUMO2); alternate). At Lys56 the chain carries N6-acetyllysine. Tyr155 is subject to ADP-ribosyltyrosine. The tract at residues 232–264 (HGEGGSSGKTTGDETGAKVERADGYEPPVQESV) is disordered. Ser237 is modified (phosphoserine). Residues 242–255 (TGDETGAKVERADG) show a composition bias toward basic and acidic residues. An N6-acetyllysine; alternate modification is found at Lys249. Residue Lys249 forms a Glycyl lysine isopeptide (Lys-Gly) (interchain with G-Cter in SUMO2); alternate linkage. Tyr256 is subject to Phosphotyrosine. Position 263 is a phosphoserine (Ser263).

This sequence belongs to the eukaryotic ribosomal protein eS1 family. As to quaternary structure, component of the small ribosomal subunit. Mature ribosomes consist of a small (40S) and a large (60S) subunit. The 40S subunit contains about 33 different proteins and 1 molecule of RNA (18S). The 60S subunit contains about 49 different proteins and 3 molecules of RNA (28S, 5.8S and 5S). Identified in a IGF2BP1-dependent mRNP granule complex containing untranslated mRNAs. Binds with high affinity to IPO4. Interacts with DDIT3. Part of the small subunit (SSU) processome, composed of more than 70 proteins and the RNA chaperone small nucleolar RNA (snoRNA) U3. The protein designated S3b has the same amino acid sequence as S3a except that it lacks the C-terminal 12 residues. It is probable that S3a is converted by proteolysis, either physiologically or fortuitously, to S3b. Post-translationally, ADP-ribosylated at Tyr-155 by PARP1 in presence of HPF1.

It is found in the cytoplasm. The protein localises to the nucleus. The protein resides in the nucleolus. In terms of biological role, component of the small ribosomal subunit. The ribosome is a large ribonucleoprotein complex responsible for the synthesis of proteins in the cell. Part of the small subunit (SSU) processome, first precursor of the small eukaryotic ribosomal subunit. During the assembly of the SSU processome in the nucleolus, many ribosome biogenesis factors, an RNA chaperone and ribosomal proteins associate with the nascent pre-rRNA and work in concert to generate RNA folding, modifications, rearrangements and cleavage as well as targeted degradation of pre-ribosomal RNA by the RNA exosome. May play a role during erythropoiesis through regulation of transcription factor DDIT3. This Rattus norvegicus (Rat) protein is Small ribosomal subunit protein eS1 (Rps3a).